A 166-amino-acid chain; its full sequence is SsrA-binding protein (166 aa).

The segment at lysine 146–tyrosine 166 is disordered.

It belongs to the SmpB family.

It localises to the cytoplasm. Functionally, required for rescue of stalled ribosomes mediated by trans-translation. Binds to transfer-messenger RNA (tmRNA), required for stable association of tmRNA with ribosomes. tmRNA and SmpB together mimic tRNA shape, replacing the anticodon stem-loop with SmpB. tmRNA is encoded by the ssrA gene; the 2 termini fold to resemble tRNA(Ala) and it encodes a 'tag peptide', a short internal open reading frame. During trans-translation Ala-aminoacylated tmRNA acts like a tRNA, entering the A-site of stalled ribosomes, displacing the stalled mRNA. The ribosome then switches to translate the ORF on the tmRNA; the nascent peptide is terminated with the 'tag peptide' encoded by the tmRNA and targeted for degradation. The ribosome is freed to recommence translation, which seems to be the essential function of trans-translation. This chain is SsrA-binding protein, found in Synechococcus sp. (strain CC9605).